The following is a 302-amino-acid chain: 33 kDa chaperonin (302 aa).

Cystine bridges form between C247–C249 and C280–C283.

The protein belongs to the HSP33 family. In terms of processing, under oxidizing conditions two disulfide bonds are formed involving the reactive cysteines. Under reducing conditions zinc is bound to the reactive cysteines and the protein is inactive.

It is found in the cytoplasm. Functionally, redox regulated molecular chaperone. Protects both thermally unfolding and oxidatively damaged proteins from irreversible aggregation. Plays an important role in the bacterial defense system toward oxidative stress. This is 33 kDa chaperonin from Prochlorococcus marinus (strain AS9601).